Here is a 556-residue protein sequence, read N- to C-terminus: Tripartite motif-containing protein 16 (556 aa).

The interval 1–60 is disordered; it reads MAELDLIAPGPLTGVTAHPLAPLGPDPVSAIPVEKEDADPLSKSGEETQEQGHDPAELGA. Over residues 33–56 the composition is skewed to basic and acidic residues; sequence VEKEDADPLSKSGEETQEQGHDPA. 2 consecutive B box-type zinc fingers follow at residues 64–113 and 117–156; these read EDQI…LTEP and QDLR…STVS. A Phosphoserine modification is found at S107. Coiled coils occupy residues 163–266 and 312–332; these read NKEV…RLAA and NLIQ…REEE. S195 bears the Phosphoserine mark. A B30.2/SPRY domain is found at 347-545; that stretch reads YRTSKPEPRT…RIVDLGEEPE (199 aa).

It belongs to the TRIM/RBCC family. In terms of assembly, homodimerizes via its coiled-coil domain. Heterodimerizes with MID1, TRIM24 and PML. Interacts with Galectin-3/LGALS3 in a ULK1-dependent manner; this interaction mediates autophagy of damage endomembranes. Interacts with BECN1. Interacts with ATG16L1. Interacts with p62/SQSTM and LC3B/MAP1LC3B. Phosphorylated by ULK1. Post-translationally, auto-ubiquitinates via its B-Boxes. In terms of tissue distribution, widely expressed. Expressed in basal keratinocytes.

Its subcellular location is the cytoplasm. It catalyses the reaction S-ubiquitinyl-[E2 ubiquitin-conjugating enzyme]-L-cysteine + [acceptor protein]-L-lysine = [E2 ubiquitin-conjugating enzyme]-L-cysteine + N(6)-ubiquitinyl-[acceptor protein]-L-lysine.. Functionally, E3 ubiquitin ligase that plays an essential role in the organization of autophagic response and ubiquitination upon lysosomal and phagosomal damages. Plays a role in the stress-induced biogenesis and degradation of protein aggresomes by regulating the p62-KEAP1-NRF2 signaling and particularly by modulating the ubiquitination levels and thus stability of NRF2. Acts as a scaffold protein and facilitates autophagic degradation of protein aggregates by interacting with p62/SQSTM, ATG16L1 and LC3B/MAP1LC3B. In turn, protects the cell against oxidative stress-induced cell death as a consequence of endomembrane damage. The polypeptide is Tripartite motif-containing protein 16 (Trim16) (Mus musculus (Mouse)).